The following is a 212-amino-acid chain: Thiamine-phosphate synthase (212 aa).

4-amino-2-methyl-5-(diphosphooxymethyl)pyrimidine contacts are provided by residues 39-41 and asparagine 71; that span reads QLR. Positions 72 and 91 each coordinate Mg(2+). Residue serine 110 coordinates 4-amino-2-methyl-5-(diphosphooxymethyl)pyrimidine. Residue 136 to 138 participates in 2-[(2R,5Z)-2-carboxy-4-methylthiazol-5(2H)-ylidene]ethyl phosphate binding; sequence TGT. Lysine 139 is a 4-amino-2-methyl-5-(diphosphooxymethyl)pyrimidine binding site. 2-[(2R,5Z)-2-carboxy-4-methylthiazol-5(2H)-ylidene]ethyl phosphate is bound by residues glycine 167 and 187-188; that span reads VS.

This sequence belongs to the thiamine-phosphate synthase family. It depends on Mg(2+) as a cofactor.

The enzyme catalyses 2-[(2R,5Z)-2-carboxy-4-methylthiazol-5(2H)-ylidene]ethyl phosphate + 4-amino-2-methyl-5-(diphosphooxymethyl)pyrimidine + 2 H(+) = thiamine phosphate + CO2 + diphosphate. It carries out the reaction 2-(2-carboxy-4-methylthiazol-5-yl)ethyl phosphate + 4-amino-2-methyl-5-(diphosphooxymethyl)pyrimidine + 2 H(+) = thiamine phosphate + CO2 + diphosphate. It catalyses the reaction 4-methyl-5-(2-phosphooxyethyl)-thiazole + 4-amino-2-methyl-5-(diphosphooxymethyl)pyrimidine + H(+) = thiamine phosphate + diphosphate. Its pathway is cofactor biosynthesis; thiamine diphosphate biosynthesis; thiamine phosphate from 4-amino-2-methyl-5-diphosphomethylpyrimidine and 4-methyl-5-(2-phosphoethyl)-thiazole: step 1/1. Functionally, condenses 4-methyl-5-(beta-hydroxyethyl)thiazole monophosphate (THZ-P) and 2-methyl-4-amino-5-hydroxymethyl pyrimidine pyrophosphate (HMP-PP) to form thiamine monophosphate (TMP). The polypeptide is Thiamine-phosphate synthase (Azorhizobium caulinodans (strain ATCC 43989 / DSM 5975 / JCM 20966 / LMG 6465 / NBRC 14845 / NCIMB 13405 / ORS 571)).